A 724-amino-acid polypeptide reads, in one-letter code: Ribosomal RNA large subunit methyltransferase K/L (724 aa).

One can recognise a THUMP domain in the interval 42–153 (DAQRLVLWSR…KGRATLSVDL (112 aa)).

The protein belongs to the methyltransferase superfamily. RlmKL family.

The protein localises to the cytoplasm. The enzyme catalyses guanosine(2445) in 23S rRNA + S-adenosyl-L-methionine = N(2)-methylguanosine(2445) in 23S rRNA + S-adenosyl-L-homocysteine + H(+). It catalyses the reaction guanosine(2069) in 23S rRNA + S-adenosyl-L-methionine = N(2)-methylguanosine(2069) in 23S rRNA + S-adenosyl-L-homocysteine + H(+). Functionally, specifically methylates the guanine in position 2445 (m2G2445) and the guanine in position 2069 (m7G2069) of 23S rRNA. This is Ribosomal RNA large subunit methyltransferase K/L from Xylella fastidiosa (strain 9a5c).